Here is a 301-residue protein sequence, read N- to C-terminus: Quinolinate synthase (301 aa).

Positions 21 and 38 each coordinate iminosuccinate. Cys-83 lines the [4Fe-4S] cluster pocket. Residues Tyr-109–Asn-111 and Ser-126 contribute to the iminosuccinate site. Position 169 (Cys-169) interacts with [4Fe-4S] cluster. Residues His-195–Glu-197 and Thr-212 contribute to the iminosuccinate site. Cys-257 contacts [4Fe-4S] cluster.

This sequence belongs to the quinolinate synthase family. Type 2 subfamily. It depends on [4Fe-4S] cluster as a cofactor.

The protein localises to the cytoplasm. It catalyses the reaction iminosuccinate + dihydroxyacetone phosphate = quinolinate + phosphate + 2 H2O + H(+). Its pathway is cofactor biosynthesis; NAD(+) biosynthesis; quinolinate from iminoaspartate: step 1/1. In terms of biological role, catalyzes the condensation of iminoaspartate with dihydroxyacetone phosphate to form quinolinate. This chain is Quinolinate synthase, found in Clostridium perfringens (strain ATCC 13124 / DSM 756 / JCM 1290 / NCIMB 6125 / NCTC 8237 / Type A).